A 477-amino-acid chain; its full sequence is Bifunctional protein HldE (477 aa).

Positions 1 to 318 (MKVTLPEFER…ENAVRGRAET (318 aa)) are ribokinase. The residue at position 179 (K179) is an N6-acetyllysine. An ATP-binding site is contributed by 195–198 (NLSE). D264 is a catalytic residue. The cytidylyltransferase stretch occupies residues 344–477 (MTNGVFDILH…IKKIQQDKKG (134 aa)).

In the N-terminal section; belongs to the carbohydrate kinase PfkB family. The protein in the C-terminal section; belongs to the cytidylyltransferase family. In terms of assembly, homodimer.

The catalysed reaction is D-glycero-beta-D-manno-heptose 7-phosphate + ATP = D-glycero-beta-D-manno-heptose 1,7-bisphosphate + ADP + H(+). The enzyme catalyses D-glycero-beta-D-manno-heptose 1-phosphate + ATP + H(+) = ADP-D-glycero-beta-D-manno-heptose + diphosphate. The protein operates within nucleotide-sugar biosynthesis; ADP-L-glycero-beta-D-manno-heptose biosynthesis; ADP-L-glycero-beta-D-manno-heptose from D-glycero-beta-D-manno-heptose 7-phosphate: step 1/4. It participates in nucleotide-sugar biosynthesis; ADP-L-glycero-beta-D-manno-heptose biosynthesis; ADP-L-glycero-beta-D-manno-heptose from D-glycero-beta-D-manno-heptose 7-phosphate: step 3/4. Its function is as follows. Catalyzes the phosphorylation of D-glycero-D-manno-heptose 7-phosphate at the C-1 position to selectively form D-glycero-beta-D-manno-heptose-1,7-bisphosphate. In terms of biological role, catalyzes the ADP transfer from ATP to D-glycero-beta-D-manno-heptose 1-phosphate, yielding ADP-D-glycero-beta-D-manno-heptose. In Shigella dysenteriae serotype 1 (strain Sd197), this protein is Bifunctional protein HldE.